A 204-amino-acid polypeptide reads, in one-letter code: Small ribosomal subunit protein uS4 (204 aa).

Positions 94-157 constitute an S4 RNA-binding domain; sequence RRLDNVVYRL…KKLEVFKENL (64 aa).

This sequence belongs to the universal ribosomal protein uS4 family. In terms of assembly, part of the 30S ribosomal subunit. Contacts protein S5. The interaction surface between S4 and S5 is involved in control of translational fidelity.

One of the primary rRNA binding proteins, it binds directly to 16S rRNA where it nucleates assembly of the body of the 30S subunit. Its function is as follows. With S5 and S12 plays an important role in translational accuracy. This Sulfurihydrogenibium sp. (strain YO3AOP1) protein is Small ribosomal subunit protein uS4.